Here is a 432-residue protein sequence, read N- to C-terminus: Benzoyl-CoA reductase subunit B (432 aa).

This sequence belongs to the FldB/FldC dehydratase alpha/beta subunit family. As to quaternary structure, heterotetramer composed of A, B, C, and D subunits. Iron-sulfur cluster is required as a cofactor. The cofactor is an oxidized flavin.

It carries out the reaction cyclohexa-1,5-diene-1-carbonyl-CoA + oxidized 2[4Fe-4S]-[ferredoxin] + 2 ADP + 2 phosphate = reduced 2[4Fe-4S]-[ferredoxin] + benzoyl-CoA + 2 ATP + 2 H2O. It catalyses the reaction 3-hydroxybenzoyl-CoA + AH2 + 2 ATP + 2 H2O = 3-hydroxycyclohexa-1,5-diene-1-carbonyl-CoA + A + 2 ADP + 2 phosphate + 2 H(+). Its function is as follows. Catalyzes the anaerobic reduction of benzoyl-CoA and 3-hydroxybenzoyl-CoA to form cyclohexa-1,5-diene-1-carbonyl-CoA and 3-hydroxycyclohexa-1,5-diene-1-carbonyl-CoA, respectively. The enzyme also reduces other benzoyl-CoA analogs with small substituents at the aromatic ring. This chain is Benzoyl-CoA reductase subunit B (bcrB), found in Thauera aromatica.